Reading from the N-terminus, the 149-residue chain is Large ribosomal subunit protein bL9 (149 aa).

The protein belongs to the bacterial ribosomal protein bL9 family.

In terms of biological role, binds to the 23S rRNA. The sequence is that of Large ribosomal subunit protein bL9 from Xanthomonas campestris pv. campestris (strain 8004).